We begin with the raw amino-acid sequence, 616 residues long: Chaperone protein DnaK (616 aa).

T175 carries the phosphothreonine; by autocatalysis modification. A disordered region spans residues G579–V605.

It belongs to the heat shock protein 70 family.

Its function is as follows. Acts as a chaperone. This chain is Chaperone protein DnaK, found in Clostridium botulinum (strain Alaska E43 / Type E3).